The sequence spans 102 residues: Small ribosomal subunit protein uS10 (102 aa).

The protein belongs to the universal ribosomal protein uS10 family. As to quaternary structure, part of the 30S ribosomal subunit.

Functionally, involved in the binding of tRNA to the ribosomes. The chain is Small ribosomal subunit protein uS10 from Hyperthermus butylicus (strain DSM 5456 / JCM 9403 / PLM1-5).